Here is a 382-residue protein sequence, read N- to C-terminus: Protein MSN1 (382 aa).

The segment at 12–26 is leucine-zipper; it reads LNENEAILTNRVAEL. Polar residues-rich tracts occupy residues 104 to 114 and 122 to 138; these read TLDPQGFTDGT and NYTS…HPQN. 2 disordered regions span residues 104–138 and 155–260; these read TLDP…HPQN and NSQE…EEEQ. Over residues 162 to 180 the composition is skewed to low complexity; the sequence is SQQQTNSSNSISQENNSTN. Polar residues-rich tracts occupy residues 181-198 and 207-221; these read PSVD…SNLV and NPPN…GLYI. The segment covering 222-231 has biased composition (low complexity); it reads SSNSSQSRQS. The segment covering 232 to 253 has biased composition (polar residues); sequence PNLQKVSPNHENAVESNAQESV. The Nuclear localization signal signature appears at 266–271; the sequence is GLKRKR.

The protein localises to the nucleus. Its function is as follows. May function as a transcriptional activator. Increased dosage of MSN1 restores invertase expression in yeast mutants defective in the SNF1 protein kinase, and msn1 disruption reduced derepression of invertase in the wild-type. May affect SUC2 expression. Expression of MSN1 enhances growth in iron-limiting conditions. The protein is Protein MSN1 (MSN1) of Saccharomyces cerevisiae (strain ATCC 204508 / S288c) (Baker's yeast).